We begin with the raw amino-acid sequence, 301 residues long: Glycine--tRNA ligase alpha subunit (301 aa).

This sequence belongs to the class-II aminoacyl-tRNA synthetase family. Tetramer of two alpha and two beta subunits.

Its subcellular location is the cytoplasm. It catalyses the reaction tRNA(Gly) + glycine + ATP = glycyl-tRNA(Gly) + AMP + diphosphate. This chain is Glycine--tRNA ligase alpha subunit, found in Shewanella piezotolerans (strain WP3 / JCM 13877).